Here is a 372-residue protein sequence, read N- to C-terminus: Putative 8-amino-7-oxononanoate synthase (372 aa).

Position 20 (R20) interacts with substrate. 94 to 95 is a binding site for pyridoxal 5'-phosphate; that stretch reads GY. Substrate is bound at residue H119. Pyridoxal 5'-phosphate-binding positions include S167, 192–195, and 223–226; these read DDAH and TLSK. K226 is modified (N6-(pyridoxal phosphate)lysine). Position 337 (T337) interacts with substrate.

The protein belongs to the class-II pyridoxal-phosphate-dependent aminotransferase family. BioF subfamily. Homodimer. Pyridoxal 5'-phosphate is required as a cofactor.

The enzyme catalyses 6-carboxyhexanoyl-[ACP] + L-alanine + H(+) = (8S)-8-amino-7-oxononanoate + holo-[ACP] + CO2. The protein operates within cofactor biosynthesis; biotin biosynthesis. In terms of biological role, catalyzes the decarboxylative condensation of pimeloyl-[acyl-carrier protein] and L-alanine to produce 8-amino-7-oxononanoate (AON), [acyl-carrier protein], and carbon dioxide. In Methanocaldococcus jannaschii (strain ATCC 43067 / DSM 2661 / JAL-1 / JCM 10045 / NBRC 100440) (Methanococcus jannaschii), this protein is Putative 8-amino-7-oxononanoate synthase (bioF).